The primary structure comprises 94 residues: Integration host factor subunit beta (94 aa).

This sequence belongs to the bacterial histone-like protein family. As to quaternary structure, heterodimer of an alpha and a beta chain.

In terms of biological role, this protein is one of the two subunits of integration host factor, a specific DNA-binding protein that functions in genetic recombination as well as in transcriptional and translational control. This chain is Integration host factor subunit beta, found in Escherichia fergusonii (strain ATCC 35469 / DSM 13698 / CCUG 18766 / IAM 14443 / JCM 21226 / LMG 7866 / NBRC 102419 / NCTC 12128 / CDC 0568-73).